A 339-amino-acid polypeptide reads, in one-letter code: DNA-directed RNA polymerase subunit alpha (339 aa).

Residues 1–235 form an alpha N-terminal domain (alpha-NTD) region; the sequence is MVIQKNWQEL…DQLQVFVNFE (235 aa). Residues 251 to 339 are alpha C-terminal domain (alpha-CTD); sequence FNPALLKKVD…DLAKRFEEHY (89 aa).

The protein belongs to the RNA polymerase alpha chain family. Homodimer. The RNAP catalytic core consists of 2 alpha, 1 beta, 1 beta' and 1 omega subunit. When a sigma factor is associated with the core the holoenzyme is formed, which can initiate transcription.

It carries out the reaction RNA(n) + a ribonucleoside 5'-triphosphate = RNA(n+1) + diphosphate. In terms of biological role, DNA-dependent RNA polymerase catalyzes the transcription of DNA into RNA using the four ribonucleoside triphosphates as substrates. The polypeptide is DNA-directed RNA polymerase subunit alpha (Methylorubrum extorquens (strain CM4 / NCIMB 13688) (Methylobacterium extorquens)).